Consider the following 292-residue polypeptide: ATP synthase gamma chain (292 aa).

It belongs to the ATPase gamma chain family. F-type ATPases have 2 components, CF(1) - the catalytic core - and CF(0) - the membrane proton channel. CF(1) has five subunits: alpha(3), beta(3), gamma(1), delta(1), epsilon(1). CF(0) has three main subunits: a, b and c.

The protein localises to the cell inner membrane. Produces ATP from ADP in the presence of a proton gradient across the membrane. The gamma chain is believed to be important in regulating ATPase activity and the flow of protons through the CF(0) complex. This Nitrobacter hamburgensis (strain DSM 10229 / NCIMB 13809 / X14) protein is ATP synthase gamma chain.